A 398-amino-acid chain; its full sequence is Probable aminomethyltransferase (398 aa).

The protein belongs to the GcvT family. In terms of assembly, the glycine cleavage system is composed of four proteins: P, T, L and H.

The catalysed reaction is N(6)-[(R)-S(8)-aminomethyldihydrolipoyl]-L-lysyl-[protein] + (6S)-5,6,7,8-tetrahydrofolate = N(6)-[(R)-dihydrolipoyl]-L-lysyl-[protein] + (6R)-5,10-methylene-5,6,7,8-tetrahydrofolate + NH4(+). Functionally, the glycine cleavage system catalyzes the degradation of glycine. This is Probable aminomethyltransferase from Pyrococcus abyssi (strain GE5 / Orsay).